Consider the following 589-residue polypeptide: ATP-dependent lipid A-core flippase (589 aa).

A run of 5 helical transmembrane segments spans residues 29-49 (LLLV…TGFL), 70-90 (WLPV…YITD), 157-177 (VIGA…TILV), 261-281 (MIGA…ALAG), and 283-303 (LTAG…PGLK). The ABC transmembrane type-1 domain maps to 32 to 314 (VAALIAALIE…LTNVQNMVQR (283 aa)). Residues 346–582 (IEFRDVTARY…GGLYSHLHGM (237 aa)) form the ABC transporter domain. Residue 380-387 (GRSGSGKS) coordinates ATP.

The protein belongs to the ABC transporter superfamily. Lipid exporter (TC 3.A.1.106) family. In terms of assembly, homodimer.

Its subcellular location is the cell inner membrane. It catalyses the reaction ATP + H2O + lipid A-core oligosaccharideSide 1 = ADP + phosphate + lipid A-core oligosaccharideSide 2.. Its function is as follows. Involved in lipopolysaccharide (LPS) biosynthesis. Translocates lipid A-core from the inner to the outer leaflet of the inner membrane. Transmembrane domains (TMD) form a pore in the inner membrane and the ATP-binding domain (NBD) is responsible for energy generation. The sequence is that of ATP-dependent lipid A-core flippase from Xanthomonas axonopodis pv. citri (strain 306).